The sequence spans 248 residues: tRNA1(Val) (adenine(37)-N6)-methyltransferase (248 aa).

It belongs to the methyltransferase superfamily. tRNA (adenine-N(6)-)-methyltransferase family.

The protein resides in the cytoplasm. The enzyme catalyses adenosine(37) in tRNA1(Val) + S-adenosyl-L-methionine = N(6)-methyladenosine(37) in tRNA1(Val) + S-adenosyl-L-homocysteine + H(+). Functionally, specifically methylates the adenine in position 37 of tRNA(1)(Val) (anticodon cmo5UAC). In Yersinia pseudotuberculosis serotype O:1b (strain IP 31758), this protein is tRNA1(Val) (adenine(37)-N6)-methyltransferase.